The sequence spans 421 residues: UPF0415 protein C7orf25 homolog (421 aa).

Belongs to the UPF0415 family.

The protein is UPF0415 protein C7orf25 homolog of Bos taurus (Bovine).